The primary structure comprises 1470 residues: Calmodulin-regulated spectrin-associated protein 2 (1470 aa).

The region spanning 222-335 (WKLVPARYRK…FMAELFWWFE (114 aa)) is the Calponin-homology (CH) domain. The interval 374–397 (SSSSSDFTSRYTRPQTHSSVSGGI) is disordered. Positions 380 to 390 (FTSRYTRPQTH) are enriched in polar residues. 2 positions are modified to phosphoserine: Ser402 and Ser404. A Phosphothreonine modification is found at Thr412. Phosphoserine is present on residues Ser450, Ser581, Ser582, Ser594, and Ser656. Disordered stretches follow at residues 580–622 (QSSP…EDSS) and 648–712 (ASNP…EGSE). At Thr661 the chain carries Phosphothreonine. The residue at position 663 (Ser663) is a Phosphoserine. Residues 663–682 (STKSQPGSSASSSSGVKMTS) show a composition bias toward low complexity. Residues 686 to 696 (QKFRKLNHTDG) are compositionally biased toward basic and acidic residues. The stretch at 739–776 (LLASEMVHLRMRLEEKRRAIEAQKKKMEAAFTKQRQKM) forms a coiled coil. Basic and acidic residues predominate over residues 796–835 (REEAAGAEDEKVYTDRAKEKESQKMDGQRSKSLADIKESM). Positions 796–864 (REEAAGAEDE…QWNLTSPSEE (69 aa)) are disordered. A Phosphoserine modification is found at Ser845. Residues 870–909 (ELLEYTKSIEKLNSSLHFLQQEMQRLSLQQEMLMQMREQQ) are a coiled coil. The MBD region stretch occupies residues 905–1016 (MREQQSWVIS…IQTRSFVCFG (112 aa)). A phosphoserine mark is found at Ser914 and Ser919. Disordered stretches follow at residues 930 to 1059 (RQAG…PLES) and 1078 to 1099 (NEDQ…PTAP). The segment covering 935–946 (SSAAAPFSADSP) has biased composition (low complexity). Over residues 952 to 971 (SPQSSTRKSASFSVKNQRTP) the composition is skewed to polar residues. Thr979, Thr984, and Thr986 each carry phosphothreonine. Phosphoserine is present on residues Ser990 and Ser1001. A compositionally biased stretch (polar residues) spans 1001–1011 (SPSQVPIQTRS). Composition is skewed to basic and acidic residues over residues 1020–1037 (EPQK…EPSE) and 1044–1056 (SCDH…EVKP). Residues 1086 to 1098 (TDPPPKPVFPPTA) show a composition bias toward pro residues. Ser1129 is subject to Phosphoserine. The stretch at 1147 to 1219 (KDDQKAENDM…REFIRQEYMR (73 aa)) forms a coiled coil. A compositionally biased stretch (basic and acidic residues) spans 1167–1233 (RLRREKETQL…KLMEDMDTVI (67 aa)). Residues 1167–1327 (RLRREKETQL…TTSSVASGTE (161 aa)) form a disordered region. Over residues 1268–1280 (SSLSLASLNTGDT) the composition is skewed to polar residues. Residues Ser1294, Ser1300, and Ser1302 each carry the phosphoserine modification. The segment covering 1315–1327 (NASTTSSVASGTE) has biased composition (polar residues). The CKK domain maps to 1330-1464 (GPKLYKEPSA…QTKRPVTPKK (135 aa)).

It belongs to the CAMSAP1 family. In terms of assembly, interacts with CAMSAP3. Interacts with KATNA1 and KATNB1; leading to regulate the length of CAMSAP2-decorated microtubule stretches. Interacts with a complex formed by AKAP9 and PDE4DIP; this interaction, which is PDE4DIP isoform-specific, recruits CAMSAP2 to the Golgi. Interacts with MAPRE1/EB1. As to expression, present in the soma, axon, and dendritic shaft of hippocampal neurons (at protein level).

It is found in the cytoplasm. The protein resides in the cytoskeleton. The protein localises to the golgi apparatus. It localises to the cilium basal body. In terms of biological role, key microtubule-organizing protein that specifically binds the minus-end of non-centrosomal microtubules and regulates their dynamics and organization. Specifically recognizes growing microtubule minus-ends and autonomously decorates and stabilizes microtubule lattice formed by microtubule minus-end polymerization. Acts on free microtubule minus-ends that are not capped by microtubule-nucleating proteins or other factors and protects microtubule minus-ends from depolymerization. In addition, it also reduces the velocity of microtubule polymerization. Through the microtubule cytoskeleton, also regulates the organization of cellular organelles including the Golgi and the early endosomes. Essential for the tethering, but not for nucleation of non-centrosomal microtubules at the Golgi: together with Golgi-associated proteins AKAP9 and PDE4DIP, required to tether non-centrosomal minus-end microtubules to the Golgi, an important step for polarized cell movement. Also acts as a regulator of neuronal polarity and development: localizes to non-centrosomal microtubule minus-ends in neurons and stabilizes non-centrosomal microtubules, which is required for neuronal polarity, axon specification and dendritic branch formation. Through the microtubule cytoskeleton, regulates the autophagosome transport. The protein is Calmodulin-regulated spectrin-associated protein 2 of Rattus norvegicus (Rat).